A 2251-amino-acid polypeptide reads, in one-letter code: U3 small nucleolar RNA-associated protein 10 (2251 aa).

Residues 945–983 (VVPLLLTALADAEAAIRLAAIACLAHILAICKYAGDLAK) form an HEAT repeat. 2 helical membrane-spanning segments follow: residues 962-982 (LAAI…GDLA) and 1460-1480 (LLVD…LLVD).

Belongs to the HEATR1/UTP10 family. In terms of assembly, component of the ribosomal small subunit (SSU) processome.

The protein resides in the nucleus. Its subcellular location is the nucleolus. The protein localises to the membrane. In terms of biological role, involved in nucleolar processing of pre-18S ribosomal RNA. Involved in ribosome biosynthesis. The sequence is that of U3 small nucleolar RNA-associated protein 10 from Mycosarcoma maydis (Corn smut fungus).